The primary structure comprises 236 residues: Small ribosomal subunit protein uS2c (236 aa).

It belongs to the universal ribosomal protein uS2 family.

It localises to the plastid. The protein localises to the chloroplast. This is Small ribosomal subunit protein uS2c (rps2) from Manihot esculenta (Cassava).